The chain runs to 271 residues: Mannosyl-3-phosphoglycerate phosphatase (271 aa).

D13 acts as the Nucleophile in catalysis. Residues D13, D15, and D214 each contribute to the Mg(2+) site.

Belongs to the HAD-like hydrolase superfamily. MPGP family. The cofactor is Mg(2+).

The protein localises to the cytoplasm. It catalyses the reaction 2-O-(alpha-D-mannosyl)-3-phosphoglycerate + H2O = (2R)-2-O-(alpha-D-mannosyl)-glycerate + phosphate. The protein is Mannosyl-3-phosphoglycerate phosphatase (yedP) of Escherichia coli O6:H1 (strain CFT073 / ATCC 700928 / UPEC).